Consider the following 385-residue polypeptide: Putative glutamate--cysteine ligase 2 (385 aa).

It belongs to the glutamate--cysteine ligase type 2 family. YbdK subfamily.

It catalyses the reaction L-cysteine + L-glutamate + ATP = gamma-L-glutamyl-L-cysteine + ADP + phosphate + H(+). Its function is as follows. ATP-dependent carboxylate-amine ligase which exhibits weak glutamate--cysteine ligase activity. This chain is Putative glutamate--cysteine ligase 2, found in Solibacter usitatus (strain Ellin6076).